We begin with the raw amino-acid sequence, 70 residues long: GEECDCGSPSNPCCDAATCKLRPGAQCADGLCCDQCRFKKKRTICRIARGDFPDDRCTGQSADCPRWNGL.

The 70-residue stretch at Gly-1–Leu-70 folds into the Disintegrin domain. Intrachain disulfides connect Cys-4–Cys-19, Cys-6–Cys-14, Cys-13–Cys-36, Cys-27–Cys-33, Cys-32–Cys-57, and Cys-45–Cys-64. The Cell attachment site signature appears at Arg-49–Asp-51.

This sequence belongs to the venom metalloproteinase (M12B) family. P-II subfamily. P-IIa sub-subfamily. As to quaternary structure, monomer. As to expression, expressed by the venom gland.

Its subcellular location is the secreted. Inhibits fibrinogen interaction with platelets. Acts by binding to alpha-IIb/beta-3 (ITGA2B/ITGB3) on the platelet surface and inhibits aggregation induced by ADP, thrombin, platelet-activating factor and collagen. This chain is Disintegrin triflavin, found in Protobothrops flavoviridis (Habu).